Reading from the N-terminus, the 396-residue chain is Tryptophan synthase beta chain (396 aa).

Lys86 carries the N6-(pyridoxal phosphate)lysine modification.

It belongs to the TrpB family. In terms of assembly, tetramer of two alpha and two beta chains. It depends on pyridoxal 5'-phosphate as a cofactor.

The enzyme catalyses (1S,2R)-1-C-(indol-3-yl)glycerol 3-phosphate + L-serine = D-glyceraldehyde 3-phosphate + L-tryptophan + H2O. It functions in the pathway amino-acid biosynthesis; L-tryptophan biosynthesis; L-tryptophan from chorismate: step 5/5. Functionally, the beta subunit is responsible for the synthesis of L-tryptophan from indole and L-serine. The protein is Tryptophan synthase beta chain of Photobacterium profundum (strain SS9).